Here is a 1621-residue protein sequence, read N- to C-terminus: MENSGCALEVRWVQGINKKKVTFINDHTVCYPCGNFIVFHDTNTGKWSFLQCTTGSTGAFAVNTYSEVVAFSDQKLHPTIYVYTFPGFVKRAELKDGAQLDYSLIAFSHAAPYLASYSSIPDHVLTIWNWQESIPLCSKSDSQTTYTTLTFNPMNWHQLCLSSERSLTVWNIEICDNQYQLKAMPVKLPSEDGTTDIEEENLNSHTSNSVSYYGPLMPTSAVAGLVGDEAEIFIPKEQRKHSVQPSFHCWNATSDLYVGCAGGQILSISAETQKVTILAQKDQSADHLSRTTLLEGNIKTMAFHKEGLYVAGNDGVLHLFTIKGSEVKLEDSWNAQEPIDSISFSPSYKTLSITTSKGSLYLYNQRNPEETYKLLNVYSRDLLAADFLTFGNKYCLGTDISGHVQLWSVEDGKSVSSLNLNIQATAMACCPSSNYAAVGSSTGHIYFIDAVKTEAPRIVQRTRLYCVPVQHMHFDPRGNFLLTGAADRHIFILDARPSYSFQVLGYIVVCGEILTLSSLSSADTQQTKVMALVCPVDERKEEKGGTQLEMFSLPLQMLSSPSEYIDERGMFKDTMIQKISYDVDQPLFSAVMGYNSSSVFGYSSNETILLKYVIHKDISGSPVTALVAEKVVRGSQLGPGVLCLSPHLKWMAVSGRDGIVYVKDLLNMETMAQLQCHSYHNGGINSLAFSLDGQSIVTTGTCDGALVCLQWKSSGRSSSRLGLAGEYGKDLALSLQAAMKEEDQALSRMPVWTADADSLGVERKGKEYSQLSVDVTEQDSFPNTSANDVTWIKRKLEEAEKKETEKYAAEKEVIKTGIKKLRKTIQAMMRENESLPDIEKLDQQEFNLDTEEQERLYLDSEKEVARVRQEIELENLSKQYLREVIKQECWDSMAVKGRSVTAFHTGYEVMNYPMKERTPKELEKFARVLNLMKIEAVDLKVRKEIVETQPKIGPDDEEEVEEELMKCQDSSSLVGSLSDHYGGDTSCLYSQLILHSREEKINQIILLQDIIQNIKNAFNKDFDTVCRQKEQEITRVMERNNRIQEIMVELNLQEKLLEPTFTDNEKPERALTVDDSEVKVERYLTPEQKAKAEHLAKVEEAKRLAAQEDNAKQRALDDMMGGVLEVKKEDILRMEVPQPVFLARTEAEWTEEEKKQFKEYEKKCKDLSEEKEKYSKEELKINNLLFSLLIEEEINTRVAHLAYILDKKRKQKNQTAEIVKSFKSQVMAFRESYDNLVAEDKLLDRGFKKEFSDITSYQVDQLYKLYKRRPRVQRLRTQADSTAPFGERPGSAKAYKDSIALLMHAMDELDTPENVPEGVELPVWQRFCLARRSKIEYEQQVKIKALVLAEMQAFLDKRIEEDEKMRQDIENFMQELNVLRNEKMKFQLDLTVQFLLKQGQVELENTDLIPSFEDAILLHRSVIEDLNSTIKGLGEQKIASMVESKDFRKGIFQLEWEHRKIRMEMEDLEKKSRDISLLHVSKEFQVFLNEQNYDKRMSDQIQVLEETINAQEKQHGKNVKTYKKILKDLETHINKKIIANLELDKDLQELLVSFSERKHIYDVVGVEQSTEKAAKERYMEIIQRRKLVDLAKIQAQEIHELRSEVDRLRMKTFPALVQMEY.

WD repeat units follow at residues 97 to 138, 141 to 180, 293 to 330, 334 to 373, 377 to 417, 464 to 503, 634 to 673, and 679 to 721; these read GAQL…PLCS, DSQT…NQYQ, LLEG…VKLE, NAQE…ETYK, VYSR…SVSS, LYCV…SFQV, GSQL…TMAQ, and YHNG…SSRL. Coiled-coil stretches lie at residues 792–812, 850–870, 1026–1046, 1098–1118, 1150–1177, 1362–1389, 1451–1514, and 1591–1611; these read IKRK…AEKE, TEEQ…VRQE, CRQK…IQEI, VEEA…ALDD, TEEE…YSKE, DEKM…FQLD, IFQL…QEKQ, and AKIQ…LRMK.

It belongs to the CFAP43 family.

The protein localises to the cytoplasm. The protein resides in the cytoskeleton. It localises to the cilium axoneme. In terms of biological role, involved in the regulation of the beating frequency of motile cilia in multiciliated cells of the larval epidermis. This is Cilia- and flagella-associated protein 43 (cfap43) from Xenopus laevis (African clawed frog).